Reading from the N-terminus, the 319-residue chain is tRNA dimethylallyltransferase (319 aa).

10-17 contributes to the ATP binding site; sequence GPTAVGKT. 12–17 provides a ligand contact to substrate; it reads TAVGKT. Positions 35–38 are interaction with substrate tRNA; sequence DSMQ.

The protein belongs to the IPP transferase family. Monomer. Mg(2+) serves as cofactor.

It carries out the reaction adenosine(37) in tRNA + dimethylallyl diphosphate = N(6)-dimethylallyladenosine(37) in tRNA + diphosphate. Its function is as follows. Catalyzes the transfer of a dimethylallyl group onto the adenine at position 37 in tRNAs that read codons beginning with uridine, leading to the formation of N6-(dimethylallyl)adenosine (i(6)A). This is tRNA dimethylallyltransferase from Symbiobacterium thermophilum (strain DSM 24528 / JCM 14929 / IAM 14863 / T).